A 712-amino-acid polypeptide reads, in one-letter code: Golgin candidate 3 (712 aa).

Positions D23–F49 are disordered. Residues N36 to F49 show a composition bias toward polar residues. A coiled-coil region spans residues A65–R134. A compositionally biased stretch (polar residues) spans G135–N150. Disordered regions lie at residues G135–F176 and E306–S347. Coiled-coil stretches lie at residues Q197–S313, G340–M558, and L659–A690. The span at S328–M344 shows a compositional bias: basic and acidic residues. The 52-residue stretch at R557–A608 folds into the GRIP domain. The disordered stretch occupies residues E666–R712. A compositionally biased stretch (basic and acidic residues) spans A678–E695. Residues F696 to R712 show a composition bias toward polar residues.

As to quaternary structure, interacts with ARF1; preferentially with the active form of the protein.

It localises to the golgi apparatus. The protein resides in the endosome. Functionally, golgi matrix protein playing a role in tethering of vesicles to Golgi membranes and in maintaining the overall structure of the Golgi apparatus. The sequence is that of Golgin candidate 3 (GC3) from Arabidopsis thaliana (Mouse-ear cress).